The sequence spans 31 residues: MEALVYTFLLIGTLGVIFFAIFFRESPRINK.

The chain crosses the membrane as a helical span at residues 3–23 (ALVYTFLLIGTLGVIFFAIFF).

This sequence belongs to the PsbT family. As to quaternary structure, PSII is composed of 1 copy each of membrane proteins PsbA, PsbB, PsbC, PsbD, PsbE, PsbF, PsbH, PsbI, PsbJ, PsbK, PsbL, PsbM, PsbT, PsbY, PsbZ, Psb30/Ycf12, at least 3 peripheral proteins of the oxygen-evolving complex and a large number of cofactors. It forms dimeric complexes.

Its subcellular location is the plastid. It localises to the chloroplast thylakoid membrane. Found at the monomer-monomer interface of the photosystem II (PS II) dimer, plays a role in assembly and dimerization of PSII. PSII is a light-driven water plastoquinone oxidoreductase, using light energy to abstract electrons from H(2)O, generating a proton gradient subsequently used for ATP formation. This is Photosystem II reaction center protein T from Euglena gracilis.